We begin with the raw amino-acid sequence, 1204 residues long: TPR repeat-containing protein DDB_G0287999 (1204 aa).

Positions 32 to 48 (TTDTTTTTSTSTTTDTD) are enriched in low complexity. The segment at 32-55 (TTDTTTTTSTSTTTDTDTNSEKSN) is disordered. 3 TPR repeats span residues 263–296 (SKGL…YKDL), 379–412 (NDSN…DQLY), and 583–617 (IQHF…GSVT). The tract at residues 360–387 (QPPPQEQQLMDDDSNSNSNNDSNNIIKN) is disordered. The segment covering 374-387 (NSNSNNDSNNIIKN) has biased composition (low complexity). 2 disordered regions span residues 639–660 (NNNN…NNNN) and 761–797 (DDND…KTTT). The segment covering 766-778 (DNNNNNNNNNNNN) has biased composition (low complexity).

This is TPR repeat-containing protein DDB_G0287999 from Dictyostelium discoideum (Social amoeba).